A 149-amino-acid polypeptide reads, in one-letter code: Ribosome-binding factor A (149 aa).

The protein belongs to the RbfA family. In terms of assembly, monomer. Binds 30S ribosomal subunits, but not 50S ribosomal subunits or 70S ribosomes.

The protein localises to the cytoplasm. Functionally, one of several proteins that assist in the late maturation steps of the functional core of the 30S ribosomal subunit. Associates with free 30S ribosomal subunits (but not with 30S subunits that are part of 70S ribosomes or polysomes). Required for efficient processing of 16S rRNA. May interact with the 5'-terminal helix region of 16S rRNA. In Caulobacter vibrioides (strain ATCC 19089 / CIP 103742 / CB 15) (Caulobacter crescentus), this protein is Ribosome-binding factor A.